The sequence spans 352 residues: Thymidine kinase (352 aa).

26 to 33 (GSMGIGKT) provides a ligand contact to ATP. The Proton acceptor role is filled by Glu-54. Residue Gln-95 participates in substrate binding. Arg-185 is a binding site for ATP. Residue Arg-191 participates in substrate binding.

The protein belongs to the herpesviridae thymidine kinase family. As to quaternary structure, homodimer.

The enzyme catalyses thymidine + ATP = dTMP + ADP + H(+). Functionally, catalyzes the transfer of the gamma-phospho group of ATP to thymidine to generate dTMP in the salvage pathway of pyrimidine synthesis. The dTMP serves as a substrate for DNA polymerase during viral DNA replication. Allows the virus to be reactivated and to grow in non-proliferative cells lacking a high concentration of phosphorylated nucleic acid precursors. In Gallid herpesvirus 2 (strain Chicken/Md5/ATCC VR-987) (GaHV-2), this protein is Thymidine kinase.